The sequence spans 189 residues: Probable nicotinate-nucleotide adenylyltransferase (189 aa).

Belongs to the NadD family.

It catalyses the reaction nicotinate beta-D-ribonucleotide + ATP + H(+) = deamido-NAD(+) + diphosphate. Its pathway is cofactor biosynthesis; NAD(+) biosynthesis; deamido-NAD(+) from nicotinate D-ribonucleotide: step 1/1. In terms of biological role, catalyzes the reversible adenylation of nicotinate mononucleotide (NaMN) to nicotinic acid adenine dinucleotide (NaAD). This Staphylococcus aureus (strain N315) protein is Probable nicotinate-nucleotide adenylyltransferase.